Here is a 314-residue protein sequence, read N- to C-terminus: Methionyl-tRNA formyltransferase (314 aa).

Residue 110–113 (SLLP) participates in (6S)-5,6,7,8-tetrahydrofolate binding.

This sequence belongs to the Fmt family.

It catalyses the reaction L-methionyl-tRNA(fMet) + (6R)-10-formyltetrahydrofolate = N-formyl-L-methionyl-tRNA(fMet) + (6S)-5,6,7,8-tetrahydrofolate + H(+). Attaches a formyl group to the free amino group of methionyl-tRNA(fMet). The formyl group appears to play a dual role in the initiator identity of N-formylmethionyl-tRNA by promoting its recognition by IF2 and preventing the misappropriation of this tRNA by the elongation apparatus. This Bacillus cereus (strain B4264) protein is Methionyl-tRNA formyltransferase.